The chain runs to 364 residues: Salivary endonuclease (364 aa).

The signal sequence occupies residues 1–24 (MSSFFLSISPLVLALFHVVVQVCS). A glycan (N-linked (GlcNAc...) asparagine) is linked at asparagine 285.

Belongs to the DNA/RNA non-specific endonuclease family. Requires Mg(2+) as cofactor. As to expression, saliva (at protein level). Female salivary gland.

It localises to the secreted. Functionally, hydrolyzes double-stranded DNA with no sequence specificity. Does not cleave ssDNA and RNA. May facilitate blood meal intake by lowering the local viscosity created by the release of host DNA. The polypeptide is Salivary endonuclease (Culex quinquefasciatus (Southern house mosquito)).